The following is a 452-amino-acid chain: uncharacterized protein (452 aa).

Positions 1-452 (MTAVSSNRNP…LRKPEADTAL (452 aa)) are disordered. Composition is skewed to polar residues over residues 29–41 (RTGTPRTTAVSSN), 95–111 (SPQTGTPRTTAVSSNRN), 129–144 (SPQTGTPGTTAVSSNR), and 163–176 (SPQTGTPGTTAVSS). Residues 177–193 (NRDHEDDGCLLKQESRG) show a composition bias toward basic and acidic residues. Composition is skewed to polar residues over residues 197–212 (SPQTGTPGTTAVSSNR), 231–245 (SPQTGTPGTTAVSSN), 265–280 (SPQTGTPRTTAVSSNR), 299–314 (SPQTGIPRTTAVSSNR), 333–347 (SPQTGTTRTTAVSSK), 376–394 (TAVSSNRDPRTTAVSSNRN), and 412–426 (SPQTGTPGTTAVSSN). Residues 439–452 (EPQELRKPEADTAL) show a composition bias toward basic and acidic residues.

This is an uncharacterized protein from Homo sapiens (Human).